Here is a 256-residue protein sequence, read N- to C-terminus: Protein FixA (256 aa).

Belongs to the ETF beta-subunit/FixA family. In terms of assembly, heterodimer of FixA and FixB.

It participates in amine and polyamine metabolism; carnitine metabolism. Required for anaerobic carnitine reduction. May bring reductant to CaiA. The protein is Protein FixA of Salmonella paratyphi A (strain ATCC 9150 / SARB42).